Consider the following 430-residue polypeptide: N-acylneuraminate cytidylyltransferase A (430 aa).

A disordered region spans residues methionine 1 to arginine 29. Basic and acidic residues predominate over residues asparagine 7–histidine 17. Positions lysine 9–lysine 27 match the Bipartite nuclear localization signal motif. Substrate-binding residues include arginine 38, asparagine 48, arginine 97, serine 106, serine 108, and glutamine 129. The active site involves arginine 187.

Belongs to the CMP-NeuNAc synthase family. As to quaternary structure, homotetramer.

Its subcellular location is the nucleus. It catalyses the reaction an N-acylneuraminate + CTP = a CMP-N-acyl-beta-neuraminate + diphosphate. It participates in amino-sugar metabolism; N-acetylneuraminate metabolism. In terms of biological role, catalyzes the activation of N-acetylneuraminic acid (NeuNAc) to cytidine 5'-monophosphate N-acetylneuraminic acid (CMP-NeuNAc), a substrate required for the addition of sialic acid. Also has activity towards N-glycolylneuraminic acid (Neu5Gc). Has weak activity towards 2-keto-3-deoxy-D-glycero-D-galacto-nononic acid (KDN). This is N-acylneuraminate cytidylyltransferase A from Danio rerio (Zebrafish).